Consider the following 397-residue polypeptide: Acetate kinase (397 aa).

N8 is a binding site for Mg(2+). K15 is an ATP binding site. Position 89 (R89) interacts with substrate. Catalysis depends on D146, which acts as the Proton donor/acceptor. ATP-binding positions include 206–210 (HLGNG), 281–283 (DLR), and 329–333 (GVGEN). Residue E382 coordinates Mg(2+).

It belongs to the acetokinase family. As to quaternary structure, homodimer. The cofactor is Mg(2+). It depends on Mn(2+) as a cofactor.

The protein resides in the cytoplasm. It catalyses the reaction acetate + ATP = acetyl phosphate + ADP. The protein operates within metabolic intermediate biosynthesis; acetyl-CoA biosynthesis; acetyl-CoA from acetate: step 1/2. Its function is as follows. Catalyzes the formation of acetyl phosphate from acetate and ATP. Can also catalyze the reverse reaction. This is Acetate kinase from Bacillus mycoides (strain KBAB4) (Bacillus weihenstephanensis).